The following is a 276-amino-acid chain: Small ribosomal subunit protein uS3 (276 aa).

In terms of domain architecture, KH type-2 spans 38–106 (IRRMMTKGME…QVQLNILEVK (69 aa)). Residues 216 to 228 (NAAARAGNRPARG) show a composition bias toward low complexity. The tract at residues 216–276 (NAAARAGNRP…PAAESTGTEA (61 aa)) is disordered. The span at 229–245 (GADRPAGRGGRGGERGG) shows a compositional bias: basic and acidic residues. A compositionally biased stretch (low complexity) spans 254-269 (PAAEAPKADAAAAPAA).

It belongs to the universal ribosomal protein uS3 family. Part of the 30S ribosomal subunit. Forms a tight complex with proteins S10 and S14.

Its function is as follows. Binds the lower part of the 30S subunit head. Binds mRNA in the 70S ribosome, positioning it for translation. In Streptomyces griseus subsp. griseus (strain JCM 4626 / CBS 651.72 / NBRC 13350 / KCC S-0626 / ISP 5235), this protein is Small ribosomal subunit protein uS3.